A 173-amino-acid chain; its full sequence is CASP-like protein 2D1 (173 aa).

The Cytoplasmic segment spans residues 1–9 (MAPLLKLLD). A helical membrane pass occupies residues 10–29 (SSLRVSVIPLSAATIWLTVT). At 30 to 50 (NHQDNSSYGNLKYSNIMGLKY) the chain is on the extracellular side. N-linked (GlcNAc...) asparagine glycosylation is present at Asn34. Residues 51 to 71 (MVCISAICASYAFVAAVSIWI) traverse the membrane as a helical segment. The Cytoplasmic portion of the chain corresponds to 72-86 (KCLVNKVWLFFVSDQ). The chain crosses the membrane as a helical span at residues 87–107 (IIAYLMVTSVAAAMEILYIAY). Topologically, residues 108–131 (NGDQKVTWSEACTSYGKFCNGMKT) are extracellular. The helical transmembrane segment at 132-152 (ALILHALTLCFFIVLAVISAY) threads the bilayer. Residues 153–173 (RAFSMYQPPVSSKETVEGDAT) lie on the Cytoplasmic side of the membrane.

It belongs to the Casparian strip membrane proteins (CASP) family. In terms of assembly, homodimer and heterodimers.

Its subcellular location is the cell membrane. This Ricinus communis (Castor bean) protein is CASP-like protein 2D1.